A 198-amino-acid polypeptide reads, in one-letter code: MAVADPIARLVKELAKLPGIGEKTAQRLAFHILKAGPGYAGELAGAIAGVVRDVRLCSECQTLTDKDPCAVCADPRRDSRIICVVEGVPDLLAVERTHEFRGRYHVLHGALSPLDGIGPSELKIRELLLRLEREPAEEIVVATNPDVEGEATALYLTKLLKPLGVKVTRIAQGIPMGGDLEYADQVTLARALAGRREL.

The C4-type zinc finger occupies 57 to 72 (CSECQTLTDKDPCAVC). One can recognise a Toprim domain in the interval 80-175 (RIICVVEGVP…KVTRIAQGIP (96 aa)).

Belongs to the RecR family.

In terms of biological role, may play a role in DNA repair. It seems to be involved in an RecBC-independent recombinational process of DNA repair. It may act with RecF and RecO. This Anaeromyxobacter sp. (strain Fw109-5) protein is Recombination protein RecR.